Reading from the N-terminus, the 190-residue chain is Signal peptidase I W (190 aa).

The chain crosses the membrane as a helical span at residues 4–24 (ISNILYVIIFTLIIVLTLVVI). Residue Ser-45 is part of the active site. The helical transmembrane segment at 143-163 (PIGTAVLLIVPGVMLLVYAFV) threads the bilayer.

This sequence belongs to the peptidase S26B family.

Its subcellular location is the cell membrane. The enzyme catalyses Cleavage of hydrophobic, N-terminal signal or leader sequences from secreted and periplasmic proteins.. Required for the cleavage of the signal sequence of TasA and TapA, which are involved in biofilm formation. The chain is Signal peptidase I W from Bacillus subtilis (strain 168).